Here is a 66-residue protein sequence, read N- to C-terminus: ATP synthase F(0) complex subunit 8 (66 aa).

A helical transmembrane segment spans residues 8-24 (IWLLAVVIVLTTLMIFL). Lysine 54 is subject to N6-acetyllysine; alternate. N6-succinyllysine; alternate is present on lysine 54. Lysine 57 carries the post-translational modification N6-acetyllysine.

This sequence belongs to the ATPase protein 8 family. In terms of assembly, component of the ATP synthase complex composed at least of ATP5F1A/subunit alpha, ATP5F1B/subunit beta, ATP5MC1/subunit c (homooctomer), MT-ATP6/subunit a, MT-ATP8/subunit 8, ATP5ME/subunit e, ATP5MF/subunit f, ATP5MG/subunit g, ATP5MK/subunit k, ATP5MJ/subunit j, ATP5F1C/subunit gamma, ATP5F1D/subunit delta, ATP5F1E/subunit epsilon, ATP5PF/subunit F6, ATP5PB/subunit b, ATP5PD/subunit d, ATP5PO/subunit OSCP. ATP synthase complex consists of a soluble F(1) head domain (subunits alpha(3) and beta(3)) - the catalytic core - and a membrane F(0) domain - the membrane proton channel (subunits c, a, 8, e, f, g, k and j). These two domains are linked by a central stalk (subunits gamma, delta, and epsilon) rotating inside the F1 region and a stationary peripheral stalk (subunits F6, b, d, and OSCP). Interacts with PRICKLE3.

The protein localises to the mitochondrion membrane. Its function is as follows. Subunit 8, of the mitochondrial membrane ATP synthase complex (F(1)F(0) ATP synthase or Complex V) that produces ATP from ADP in the presence of a proton gradient across the membrane which is generated by electron transport complexes of the respiratory chain. ATP synthase complex consist of a soluble F(1) head domain - the catalytic core - and a membrane F(1) domain - the membrane proton channel. These two domains are linked by a central stalk rotating inside the F(1) region and a stationary peripheral stalk. During catalysis, ATP synthesis in the catalytic domain of F(1) is coupled via a rotary mechanism of the central stalk subunits to proton translocation. In vivo, can only synthesize ATP although its ATP hydrolase activity can be activated artificially in vitro. Part of the complex F(0) domain. The sequence is that of ATP synthase F(0) complex subunit 8 from Mammuthus primigenius (Siberian woolly mammoth).